A 946-amino-acid polypeptide reads, in one-letter code: Bifunctional glutamine synthetase adenylyltransferase/adenylyl-removing enzyme (946 aa).

The segment at 1-440 (MKPLSSPLQQ…VFNELIGDDE (440 aa)) is adenylyl removase. The tract at residues 449–946 (SEQWRELWQD…ASWQKWLVEE (498 aa)) is adenylyl transferase.

The protein belongs to the GlnE family. Mg(2+) serves as cofactor.

The catalysed reaction is [glutamine synthetase]-O(4)-(5'-adenylyl)-L-tyrosine + phosphate = [glutamine synthetase]-L-tyrosine + ADP. The enzyme catalyses [glutamine synthetase]-L-tyrosine + ATP = [glutamine synthetase]-O(4)-(5'-adenylyl)-L-tyrosine + diphosphate. In terms of biological role, involved in the regulation of glutamine synthetase GlnA, a key enzyme in the process to assimilate ammonia. When cellular nitrogen levels are high, the C-terminal adenylyl transferase (AT) inactivates GlnA by covalent transfer of an adenylyl group from ATP to specific tyrosine residue of GlnA, thus reducing its activity. Conversely, when nitrogen levels are low, the N-terminal adenylyl removase (AR) activates GlnA by removing the adenylyl group by phosphorolysis, increasing its activity. The regulatory region of GlnE binds the signal transduction protein PII (GlnB) which indicates the nitrogen status of the cell. The polypeptide is Bifunctional glutamine synthetase adenylyltransferase/adenylyl-removing enzyme (Shigella flexneri).